The following is an 88-amino-acid chain: Small ribosomal subunit protein uS17 (88 aa).

It belongs to the universal ribosomal protein uS17 family. As to quaternary structure, part of the 30S ribosomal subunit.

In terms of biological role, one of the primary rRNA binding proteins, it binds specifically to the 5'-end of 16S ribosomal RNA. This Prochlorococcus marinus (strain MIT 9312) protein is Small ribosomal subunit protein uS17.